The primary structure comprises 477 residues: Cysteine--tRNA ligase (477 aa).

Cys42 serves as a coordination point for Zn(2+). A 'HIGH' region motif is present at residues 44 to 54 (ATVQGLPHIGH). Positions 220, 245, and 249 each coordinate Zn(2+). Residues 276–280 (KMSKS) carry the 'KMSKS' region motif. Lys279 contacts ATP.

The protein belongs to the class-I aminoacyl-tRNA synthetase family. Monomer. Zn(2+) serves as cofactor.

It localises to the cytoplasm. It catalyses the reaction tRNA(Cys) + L-cysteine + ATP = L-cysteinyl-tRNA(Cys) + AMP + diphosphate. This Mycolicibacterium smegmatis (strain ATCC 700084 / mc(2)155) (Mycobacterium smegmatis) protein is Cysteine--tRNA ligase.